The chain runs to 148 residues: Short form salivary protein D7S1 (148 aa).

A signal peptide spans 1-21; that stretch reads MKQNVFFLIAYFSLVFCMCNA. Intrachain disulfides connect C28-C61, C41-C147, and C103-C119.

This sequence belongs to the PBP/GOBP family. Female salivary gland.

It is found in the secreted. Its function is as follows. In contrast to the related D7 salivary proteins that can bind biogenic amines, does not bind serotonin. The sequence is that of Short form salivary protein D7S1 from Aedes aegypti (Yellowfever mosquito).